A 288-amino-acid polypeptide reads, in one-letter code: Proteasome assembly chaperone 1 (288 aa).

Residue A2 is modified to N-acetylalanine. Residues 13–35 are disordered; that stretch reads PCRAGTEDEEEEEEGRRETPEDR. A Phosphothreonine modification is found at T18. The segment covering 26–35 has biased composition (basic and acidic residues); the sequence is EGRRETPEDR. The residue at position 54 (T54) is a Phosphothreonine. The residue at position 180 (S180) is a Phosphoserine. An N6-acetyllysine modification is found at K264.

The protein belongs to the PSMG1 family. In terms of assembly, forms a heterodimer with PSMG2. The PSMG1-PSMG2 heterodimer interacts directly with the PSMA5 and PSMA7 proteasome alpha subunits. Post-translationally, degraded by the proteasome upon completion of 20S proteasome maturation. In the adult, detected in brain, colon, leukocytes, breast and testis. Widely expressed in the fetus. Also expressed in a variety of proliferating cell lines.

Its subcellular location is the cytoplasm. The protein localises to the endoplasmic reticulum. Functionally, chaperone protein which promotes assembly of the 20S proteasome as part of a heterodimer with PSMG2. The PSMG1-PSMG2 heterodimer binds to the PSMA5 and PSMA7 proteasome subunits, promotes assembly of the proteasome alpha subunits into the heteroheptameric alpha ring and prevents alpha ring dimerization. This Homo sapiens (Human) protein is Proteasome assembly chaperone 1.